The primary structure comprises 573 residues: DNA damage-binding protein CMR1 (573 aa).

Positions 27–94 (DSLNDSISRE…EMEKAEERKR (68 aa)) are disordered. Positions 72–152 (TMEDSEEDKQ…EEIKKEEDST (81 aa)) form a coiled coil. A compositionally biased stretch (basic and acidic residues) spans 79 to 94 (DKQMREEMEKAEERKR). WD repeat units follow at residues 218 to 259 (ITQQ…DDET), 268 to 308 (PHGK…STEV), 319 to 357 (DYPL…KQGE), 361 to 401 (LHDK…QKNS), 418 to 456 (HSRL…KLPL), 495 to 538 (GRWV…LCHL), and 542 to 573 (DRMT…YLFE).

The protein belongs to the WD repeat DDB2/WDR76 family.

DNA-binding protein that binds to both single- and double-stranded DNA. Binds preferentially to UV-damaged DNA. May be involved in DNA-metabolic processes. This chain is DNA damage-binding protein CMR1, found in Meyerozyma guilliermondii (strain ATCC 6260 / CBS 566 / DSM 6381 / JCM 1539 / NBRC 10279 / NRRL Y-324) (Yeast).